We begin with the raw amino-acid sequence, 397 residues long: Decapping and exoribonuclease protein (397 aa).

A compositionally biased stretch (basic residues) spans 1-10; it reads MEPRGTKRKA. Residues 1–30 form a disordered region; it reads MEPRGTKRKAEKTEVEKPLNKLPRAVPSLR. Substrate is bound by residues Arg-58, Glu-101, and 131–133; that span reads WRG. Position 185 (Met-185) interacts with adenosine 3',5'-bisphosphate. Glu-192 provides a ligand contact to Mg(2+). Cys-217 and Glu-234 together coordinate substrate. Mg(2+) is bound by residues Glu-234, Asp-236, Glu-253, and Leu-254. Asp-236 is a binding site for adenosine 3',5'-bisphosphate. An adenosine 3',5'-bisphosphate; inhibitor region spans residues 253–256; it reads ELKT. Residues Lys-255 and Gln-280 each coordinate substrate. Residue Gln-280 coordinates adenosine 3',5'-bisphosphate. At Thr-392 the chain carries Phosphothreonine. The residue at position 394 (Ser-394) is a Phosphoserine.

The protein belongs to the DXO/Dom3Z family. Mg(2+) serves as cofactor.

Its subcellular location is the nucleus. It catalyses the reaction a 5'-end triphospho-ribonucleoside in mRNA + H2O = a 5'-end phospho-ribonucleoside in mRNA + diphosphate + H(+). The enzyme catalyses a 5'-end NAD(+)-phospho-ribonucleoside in mRNA + H2O = a 5'-end phospho-ribonucleoside in mRNA + NAD(+) + H(+). The catalysed reaction is a 5'-end NAD(+)-phospho-ribonucleoside in snoRNA + H2O = a 5'-end phospho-ribonucleoside in snoRNA + NAD(+) + H(+). It carries out the reaction a 5'-end (N(7)-methyl 5'-triphosphoguanosine)-ribonucleoside-ribonucleotide in mRNA + H2O = a (N(7)-methyl 5'-triphosphoguanosine)-nucleoside + a 5'-end phospho-ribonucleoside in mRNA + H(+). It catalyses the reaction a 5'-end FAD-phospho-ribonucleoside in mRNA + H2O = a 5'-end phospho-ribonucleoside in mRNA + FAD + H(+). The enzyme catalyses a 5'-end CoA-ribonucleoside in mRNA + H2O = 3'-dephospho-CoA + a 5'-end phospho-ribonucleoside in mRNA + H(+). With respect to regulation, the 5'-3' exoribonuclease activity is inhibited by adenosine 3',5'-bisphosphate. In terms of biological role, decapping enzyme for NAD-capped RNAs: specifically hydrolyzes the nicotinamide adenine dinucleotide (NAD) cap from a subset of RNAs by removing the entire NAD moiety from the 5'-end of an NAD-capped RNA. The NAD-cap is present at the 5'-end of some RNAs and snoRNAs. In contrast to the canonical 5'-end N7 methylguanosine (m7G) cap, the NAD cap promotes mRNA decay. Preferentially acts on NAD-capped transcripts in response to environmental stress. Also acts as a non-canonical decapping enzyme that removes the entire cap structure of m7G capped or incompletely capped RNAs and mediates their subsequent degradation. Specifically degrades pre-mRNAs with a defective 5'-end m7G cap and is part of a pre-mRNA capping quality control. Has decapping activity toward incomplete 5'-end m7G cap mRNAs such as unmethylated 5'-end-capped RNA (cap0), while it has no activity toward 2'-O-ribose methylated m7G cap (cap1). In contrast to canonical decapping enzymes DCP2 and NUDT16, which cleave the cap within the triphosphate linkage, the decapping activity releases the entire cap structure GpppN and a 5'-end monophosphate RNA. Also has 5'-3' exoribonuclease activities: The 5'-end monophosphate RNA is then degraded by the 5'-3' exoribonuclease activity, enabling this enzyme to decap and degrade incompletely capped mRNAs. Also possesses RNA 5'-pyrophosphohydrolase activity by hydrolyzing the 5'-end triphosphate to release pyrophosphates. Exhibits decapping activity towards FAD-capped RNAs. Exhibits decapping activity towards dpCoA-capped RNAs in vitro. This is Decapping and exoribonuclease protein from Mus musculus (Mouse).